A 225-amino-acid chain; its full sequence is Thymidylate kinase (225 aa).

Position 10–17 (10–17) interacts with ATP; sequence GPEGAGKT.

This sequence belongs to the thymidylate kinase family.

The enzyme catalyses dTMP + ATP = dTDP + ADP. Phosphorylation of dTMP to form dTDP in both de novo and salvage pathways of dTTP synthesis. The chain is Thymidylate kinase from Geobacillus thermodenitrificans (strain NG80-2).